The primary structure comprises 438 residues: GDP-mannose 6-dehydrogenase (438 aa).

Residues Tyr-10, Val-11, Asp-30, Lys-35, Thr-86, and Thr-124 each contribute to the NAD(+) site. GDP-alpha-D-mannuronate contacts are provided by Glu-161, Lys-210, Asn-214, His-217, Asn-225, Tyr-256, Tyr-257, Arg-259, Phe-262, and Gly-265. The active site involves Cys-268. Residue Lys-271 participates in NAD(+) binding. Lys-324 is a GDP-alpha-D-mannuronate binding site. Arg-331 is an NAD(+) binding site.

Belongs to the UDP-glucose/GDP-mannose dehydrogenase family.

The enzyme catalyses GDP-alpha-D-mannose + 2 NAD(+) + H2O = GDP-alpha-D-mannuronate + 2 NADH + 3 H(+). It participates in glycan biosynthesis; alginate biosynthesis. Functionally, catalyzes the oxidation of guanosine diphospho-D-mannose (GDP-D-mannose) to GDP-D-mannuronic acid, a precursor for alginate polymerization. The alginate layer causes a mucoid phenotype and provides a protective barrier against host immune defenses and antibiotics. This is GDP-mannose 6-dehydrogenase (algD) from Pseudomonas savastanoi pv. phaseolicola (Pseudomonas syringae pv. phaseolicola).